We begin with the raw amino-acid sequence, 150 residues long: Large ribosomal subunit protein bL9 (150 aa).

This sequence belongs to the bacterial ribosomal protein bL9 family.

Its function is as follows. Binds to the 23S rRNA. This Leuconostoc mesenteroides subsp. mesenteroides (strain ATCC 8293 / DSM 20343 / BCRC 11652 / CCM 1803 / JCM 6124 / NCDO 523 / NBRC 100496 / NCIMB 8023 / NCTC 12954 / NRRL B-1118 / 37Y) protein is Large ribosomal subunit protein bL9.